Consider the following 1349-residue polypeptide: MLNRENKTAITRKGMVSNRLNKFSIRKYTVGTASILVGTTLIFGLGNQEAKAAESTNKELNEATTSASDNQSSDKVDMQQLNQEDNTKNDNQKEMVSSQGNETTSNGNKLIEKESVQSTTGNKVEVSTAKSDEQASPKSTNEDLNTKQTISNQEALQPDLQENKSVVNVQPTNEENKKVDAKTESTTLNVKSDAIKSNDETLVDNNSNSNNENNADIILPKSTAPKRLNTRMRIAAVQPSSTEAKNVNDLITSNTTLTVVDADKNNKIVPAQDYLSLKSQITVDDKVKSGDYFTIKYSDTVQVYGLNPEDIKNIGDIKDPNNGETIATAKHDTANNLITYTFTDYVDRFNSVQMGINYSIYMDADTIPVSKNDVEFNVTIGNTTTKTTANIQYPDYVVNEKNSIGSAFTETVSHVGNKENPGYYKQTIYVNPSENSLTNAKLKVQAYHSSYPNNIGQINKDVTDIKIYQVPKGYTLNKGYDVNTKELTDVTNQYLQKITYGDNNSAVIDFGNADSAYVVMVNTKFQYTNSESPTLVQMATLSSTGNKSVSTGNALGFTNNQSGGAGQEVYKIGNYVWEDTNKNGVQELGEKGVGNVTVTVFDNNTNTKVGEAVTKEDGSYLIPNLPNGDYRVEFSNLPKGYEVTPSKQGNNEELDSNGLSSVITVNGKDNLSADLGIYKPKYNLGDYVWEDTNKNGIQDQDEKGISGVTVTLKDENGNVLKTVTTDADGKYKFTDLDNGNYKVEFTTPEGYTPTTVTSGSDIEKDSNGLTTTGVINGADNMTLDSGFYKTPKYNLGNYVWEDTNKDGKQDSTEKGISGVTVTLKNENGEVLQTTKTDKDGKYQFTGLENGTYKVEFETPSGYTPTQVGSGTDEGIDSNGTSTTGVIKDKDNDTIDSGFYKPTYNLGDYVWEDTNKNGVQDKDEKGISGVTVTLKDENDKVLKTVTTDENGKYQFTDLNNGTYKVEFETPSGYTPTSVTSGNDTEKDSNGLTTTGVIKDADNMTLDSGFYKTPKYSLGDYVWYDSNKDGKQDSTEKGIKDVKVTLLNEKGEVIGTTKTDENGKYCFDNLDSGKYKVIFEKPAGLTQTVTNTTEDDKDADGGEVDVTITDHDDFTLDNGYFEEDTSDSDSDSDSDSDSDSDSDSDSDSDSDSDSDSDSDSDSDSDSDSDSDSDSDSDSDSDSDSDSDSDSDSDSDSDSDSDSDSDSDSDSDSDSDSDSDSDSDSDSDSDSDSDSDSDSDSDSDSDSDSDSDSDSDSDSDSDSDSDSDSDSDSDSDSDSDSDSDSDSDSDSDAGKHTPVKPMSTTKDHHNKAKALPETGSENNGSNNATLFGGLFAALGSLLLFGRRKKQNK.

The N-terminal stretch at 1-35 (MLNRENKTAITRKGMVSNRLNKFSIRKYTVGTASI) is a signal peptide. The YSIRK-G/S signaling motif motif lies at 23 to 34 (FSIRKYTVGTAS). Residues 36–568 (LVGTTLIFGL…NNQSGGAGQE (533 aa)) are ligand binding A region. Residues 54–185 (ESTNKELNEA…NKKVDAKTES (132 aa)) form a disordered region. 2 stretches are compositionally biased toward polar residues: residues 62–71 (EATTSASDNQ) and 94–108 (EMVS…SNGN). A compositionally biased stretch (basic and acidic residues) spans 130 to 145 (KSDEQASPKSTNEDLN). 2 stretches are compositionally biased toward polar residues: residues 146-155 (TKQTISNQEA) and 163-173 (NKSVVNVQPTN). Basic and acidic residues predominate over residues 174 to 183 (EENKKVDAKT). CNA-B domains lie at 569–680 (VYKI…IYKP), 681–791 (KYNL…YKTP), 792–901 (KYNL…FYKP), 902–1012 (TYNL…YKTP), and 1013–1123 (KYSL…EEDT). Disordered stretches follow at residues 856-883 (FETP…TSTT), 972-992 (YTPT…GLTT), and 1081-1325 (AGLT…SNNA). Composition is skewed to polar residues over residues 860 to 869 (SGYTPTQVGS) and 972 to 981 (YTPTSVTSGN). Acidic residues-rich tracts occupy residues 1091-1101 (TEDDKDADGGE) and 1118-1288 (YFEE…DSDS). Residues 1312–1316 (LPETG) carry the LPXTG sorting signal motif. Residue threonine 1315 is modified to Pentaglycyl murein peptidoglycan amidated threonine. Residues 1316 to 1349 (GSENNGSNNATLFGGLFAALGSLLLFGRRKKQNK) constitute a propeptide, removed by sortase.

The protein belongs to the serine-aspartate repeat-containing protein (SDr) family. Interacts with host DSG1; this interaction increases S.aureus adherence to keratinocytes.

The protein localises to the secreted. Its subcellular location is the cell wall. In terms of biological role, cell surface-associated calcium-binding protein which plays an important role in adhesion and pathogenesis. Mediates interactions with components of the extracellular matrix such as host DSG1 to promote bacterial adhesion to host cells. Contributes to the resistance to killing by innate immune components such as neutrophils present in blood and thus attenuates bacterial clearance. The protein is Serine-aspartate repeat-containing protein D (sdrD) of Staphylococcus aureus (strain NCTC 8325 / PS 47).